Here is a 350-residue protein sequence, read N- to C-terminus: Histidinol-phosphate aminotransferase 1 (350 aa).

At lysine 210 the chain carries N6-(pyridoxal phosphate)lysine.

Belongs to the class-II pyridoxal-phosphate-dependent aminotransferase family. Histidinol-phosphate aminotransferase subfamily. Homodimer. The cofactor is pyridoxal 5'-phosphate.

It catalyses the reaction L-histidinol phosphate + 2-oxoglutarate = 3-(imidazol-4-yl)-2-oxopropyl phosphate + L-glutamate. Its pathway is amino-acid biosynthesis; L-histidine biosynthesis; L-histidine from 5-phospho-alpha-D-ribose 1-diphosphate: step 7/9. The sequence is that of Histidinol-phosphate aminotransferase 1 from Pseudomonas fluorescens (strain ATCC BAA-477 / NRRL B-23932 / Pf-5).